We begin with the raw amino-acid sequence, 458 residues long: ATP synthase subunit beta (458 aa).

Residue 148–155 (GGAGVGKT) participates in ATP binding.

The protein belongs to the ATPase alpha/beta chains family. F-type ATPases have 2 components, CF(1) - the catalytic core - and CF(0) - the membrane proton channel. CF(1) has five subunits: alpha(3), beta(3), gamma(1), delta(1), epsilon(1). CF(0) has three main subunits: a(1), b(2) and c(9-12). The alpha and beta chains form an alternating ring which encloses part of the gamma chain. CF(1) is attached to CF(0) by a central stalk formed by the gamma and epsilon chains, while a peripheral stalk is formed by the delta and b chains.

Its subcellular location is the cell inner membrane. It carries out the reaction ATP + H2O + 4 H(+)(in) = ADP + phosphate + 5 H(+)(out). Produces ATP from ADP in the presence of a proton gradient across the membrane. The catalytic sites are hosted primarily by the beta subunits. This chain is ATP synthase subunit beta, found in Ectopseudomonas mendocina (strain ymp) (Pseudomonas mendocina).